Here is a 256-residue protein sequence, read N- to C-terminus: MANNEEHPPRGNEWEVVSLTSSAYAAAPGPYNVESRDVRKYDAYYGAETSRDLYMSEHFVFPPSEHENLPIDESLFVAEQRKDGRDLMLEGQGLSDQFHYEAGNNQQSIYGESALGSSRHMESFGSESAVYEHGLVDAEGNLDLHSDGEGEKDVKKSTHNLPCEAWWKRRAISMYSRTREANAIWSLFFAAAVTGLVVLGQRWQQERWQVLQLKWQSSISSEKLGRVLEPLSRLKDVIVRSNPQASLVRSGSSSEV.

Residues 14–17 carry the AIM (Atg8-family-interacting motif) motif; it reads WEVV. Residues 181 to 200 form a helical membrane-spanning segment; it reads ANAIWSLFFAAAVTGLVVLG. The short motif at 208–211 is the AIM (Atg8-family-interacting motif) element; sequence WQVL.

Interacts with ATG8F. Interacts with ATG8H. Interacts with APE1 and PSBS/NPQ4.

The protein resides in the endoplasmic reticulum membrane. It is found in the membrane. It localises to the plastid. The protein localises to the chloroplast membrane. Functionally, involved in a special stress-induced plastid-to-vacuole protein trafficking pathway. Interacts with ATG8F in plastid bodies to subsequently enable their delivery to the vacuole by an autophagic pathway. Interacts with the plastid proteins APE1 and PSBS/NPQ4 and may recruit them as cargo into plastid bodies that may be recognized by the autophagy machinery for degradation in the vacuole. Involved in the alleviation of damage caused by salt stress during plant development, probably through its involvement in plastid-to-vacuole and ER-to-vacuole trafficking. Plays a role in seed germination in response to exogenous abscisic acid (ABA) treatment. The chain is ATG8-interacting protein 1 from Arabidopsis thaliana (Mouse-ear cress).